A 1192-amino-acid chain; its full sequence is Reticulon-4 (1192 aa).

Met-1 is subject to N-acetylmethionine. Residues 1-204 form a disordered region; sequence MEDLDQSPLV…ASEPVIRSSA (204 aa). Residues 1 to 1018 are Cytoplasmic-facing; it reads MEDLDQSPLV…LYWRDIKKTG (1018 aa). A phosphoserine mark is found at Ser-7 and Ser-15. Residues 31–53 are compositionally biased toward acidic residues; it reads PEDEEEEEEEEEEDEDEDLEELE. Low complexity predominate over residues 65–77; it reads AAPVPTAPAAGAP. Residues 87–101 are compositionally biased toward pro residues; that stretch reads PPAPRGPLPAAPPVA. At Ser-107 the chain carries Phosphoserine. Residues 110 to 132 show a composition bias toward low complexity; that stretch reads PSPVSSTVPAPSPLSAAAVSPSK. Pro residues predominate over residues 141 to 150; the sequence is ARPPPPPPAS. Ser-152 carries the post-translational modification Phosphoserine. Residues 159–173 are compositionally biased toward pro residues; the sequence is WTPPAPAPAAPPSTP. Phosphoserine is present on residues Ser-181, Ser-182, Ser-184, Ser-361, and Ser-446. Residues 427–458 form a disordered region; the sequence is DSLEQTNHEKDSESSNDDTSFPSTPEGIKDRS. Residue Thr-450 is modified to Phosphothreonine. Phosphoserine is present on Ser-511. Residues 722–734 show a composition bias toward basic and acidic residues; it reads AKVEQPVPDHSEL. The tract at residues 722-762 is disordered; that stretch reads AKVEQPVPDHSELVEDSSPDSEPVDLFSDDSIPDVPQKQDE. Residues 735–753 are compositionally biased toward acidic residues; that stretch reads VEDSSPDSEPVDLFSDDSI. Ser-749 is modified (phosphoserine). Position 858 is a phosphothreonine (Thr-858). Ser-881 and Ser-991 each carry phosphoserine. A Reticulon domain is found at 1005–1192; the sequence is VVDLLYWRDI…KIPGLKRKAE (188 aa). The chain crosses the membrane as a helical span at residues 1019–1039; it reads VVFGASLFLLLSLTVFSIVSV. The Lumenal portion of the chain corresponds to 1040-1133; that stretch reads TAYIALALLS…LMWVFTYVGA (94 aa). Lys-1104 carries the post-translational modification N6-acetyllysine. A helical transmembrane segment spans residues 1134–1154; it reads LFNGLTLLILALISLFSVPVI. Residues 1155-1192 are Cytoplasmic-facing; it reads YERHQAQIDHYLGLANKNVKDAMAKIQAKIPGLKRKAE.

In terms of assembly, binds to RTN4R. Interacts with ATL1. Interacts with TMEM170A. Interacts with RTN4IP1. Interacts in trans with CNTNAP1. Interacts with REEP5. Interacts with synaptic plasticity regulator PANTS; the interaction results in enhanced RTN4-mediated inhibition of AMPA receptor clustering. Interacts with GPR50. As to quaternary structure, homodimer. Interacts with BAD/Bcl-xl and BCL2. Interact with RTN3. Interacts with NGBR. Interacts with SPTLC1. Interacts with GRAMD4. Interacts with CDH5. Interacts with BACE1 and BACE2. Interacts with REEP5. Interacts with RETREG3. In terms of assembly, interacts with BACE1 and BACE2. Interacts with TMEM33. In terms of tissue distribution, isoform A: is specifically expressed in brain and testis and weakly in heart and skeletal muscle. Isoform B: widely expressed except for the liver. Highly expressed in endothelial cells and vascular smooth muscle cells, including blood vessels and mesenteric arteries. Isoform C: is expressed in brain, skeletal muscle and adipocytes. Isoform D is testis-specific.

The protein localises to the endoplasmic reticulum membrane. It is found in the cell membrane. It localises to the synapse. The protein resides in the cell junction. Functionally, required to induce the formation and stabilization of endoplasmic reticulum (ER) tubules. They regulate membrane morphogenesis in the ER by promoting tubular ER production. They influence nuclear envelope expansion, nuclear pore complex formation and proper localization of inner nuclear membrane proteins. However each isoform have specific functions mainly depending on their tissue expression specificities. In terms of biological role, developmental neurite growth regulatory factor with a role as a negative regulator of axon-axon adhesion and growth, and as a facilitator of neurite branching. Regulates neurite fasciculation, branching and extension in the developing nervous system. Involved in down-regulation of growth, stabilization of wiring and restriction of plasticity in the adult CNS. Regulates the radial migration of cortical neurons via an RTN4R-LINGO1 containing receptor complex. Acts as a negative regulator of central nervous system angiogenesis. Inhibits spreading, migration and sprouting of primary brain microvascular endothelial cells (MVECs). Also induces the retraction of MVECs lamellipodia and filopodia in a ROCK pathway-dependent manner. Mainly function in endothelial cells and vascular smooth muscle cells, is also involved in immune system regulation. Modulator of vascular remodeling, promotes the migration of endothelial cells but inhibits the migration of vascular smooth muscle cells. Regulates endothelial sphingolipid biosynthesis with direct effects on vascular function and blood pressure. Inhibits serine palmitoyltransferase, SPTLC1, the rate-limiting enzyme of the novo sphingolipid biosynthetic pathway, thereby controlling production of endothelial sphingosine-1-phosphate (S1P). Required to promote macrophage homing and functions such as cytokine/chemokine gene expression involved in angiogenesis, arteriogenesis and tissue repair. Mediates ICAM1 induced transendothelial migration of leukocytes such as monocytes and neutrophils and acute inflammation. Necessary for immune responses triggered by nucleic acid sensing TLRs, such as TLR9, is required for proper TLR9 location to endolysosomes. Also involved in immune response to LPS. Plays a role in liver regeneration through the modulation of hepatocytes proliferation. Reduces the anti-apoptotic activity of Bcl-xl and Bcl-2. This is likely consecutive to their change in subcellular location, from the mitochondria to the endoplasmic reticulum, after binding and sequestration. With isoform C, inhibits BACE1 activity and amyloid precursor protein processing. Its function is as follows. Regulates cardiomyocyte apoptosis upon hypoxic conditions. With isoform B, inhibits BACE1 activity and amyloid precursor protein processing. In Homo sapiens (Human), this protein is Reticulon-4.